Reading from the N-terminus, the 205-residue chain is MGTKWSKSSLVGWPEVRRRIREAPTAAEGVGEVSKDLERHGAITSRNTPETNQTLAWLEEMDNEEVGFPVRPQVPTRPMTYKAAFDLSHFLKEKGGLEGLVYSRRRQEILDLWVYHTQGFFPDWQNYTTGPGTRFPLCFGWCFKLVPLTEEQVEQANEGDNNCLLHPICQHGMEDEDKEVLVWRFDSRLALRHIAREQHPEYYKD.

Glycine 2 carries the N-myristoyl glycine; by host lipid modification. Phosphoserine; by host is present on serine 6. The interval 62-65 (DNEE) is acidic; interacts with host PACS1 and PACS2; stabilizes the interaction of NEF/MHC-I with host AP1M1; necessary for MHC-I internalization. Positions 69-78 (PVRPQVPTRP) are SH3-binding; interaction with Src family tyrosine kinases. A PxxP; stabilizes the interaction of NEF/MHC-I with host AP1M1; necessary for MHC-I internalization motif is present at residues 72-75 (PQVP). Positions 108–124 (EILDLWVYHTQGFFPDW) are mediates dimerization, Nef-PTE1 interaction. The interval 148 to 180 (LTEEQVEQANEGDNNCLLHPICQHGMEDEDKEV) is binding to ATP6V1H. Residues 164–165 (LL) carry the Dileucine internalization motif; necessary for CD4 internalization motif. A Diacidic; necessary for CD4 internalization motif is present at residues 174 to 175 (ED).

It belongs to the lentivirus primate group Nef protein family. Monomer; cytosolic form. Homodimer; membrane bound form. Interacts with Nef associated p21-activated kinase (PAK2); this interaction activates PAK2. Associates with the Nef-MHC-I-AP1 complex; this complex is required for MHC-I internalization. Interacts (via C-terminus) with host PI3-kinase. Interacts with host PACS1; this interaction seems to be weak. Interacts with host PACS2. Interacts with host LCK and MAPK3; these interactions inhibit the kinase activity of the latter. Interacts with host ATP6V1H; this interaction may play a role in CD4 endocytosis. Associates with the CD4-Nef-AP2 complex; this complex is required for CD4 internalization. Interacts with host AP2 subunit alpha and AP2 subunit sigma2. Interacts with TCR-zeta chain; this interaction up-regulates the Fas ligand (FasL) surface expression. Interacts with host HCK, LYN, and SRC; these interactions activate the Src family kinases. Interacts with MAP3K5; this interaction inhibits the Fas and TNFR-mediated death signals. Interacts with beta-COP and PTE1. Interacts with human RACK1; this increases Nef phosphorylation by PKC. Interacts with TP53; this interaction decreases the half-life of TP53, protecting the infected cell against p53-mediated apoptosis. Post-translationally, the virion-associated Nef proteins are cleaved by the viral protease to release the soluble C-terminal core protein. Nef is probably cleaved concomitantly with viral structural proteins on maturation of virus particles. Myristoylated. In terms of processing, phosphorylated on serine residues, probably by host PKCdelta and theta.

The protein localises to the host cell membrane. Its subcellular location is the virion. It is found in the secreted. It localises to the host Golgi apparatus membrane. Factor of infectivity and pathogenicity, required for optimal virus replication. Alters numerous pathways of T-lymphocyte function and down-regulates immunity surface molecules in order to evade host defense and increase viral infectivity. Alters the functionality of other immunity cells, like dendritic cells, monocytes/macrophages and NK cells. Its function is as follows. In infected CD4(+) T-lymphocytes, down-regulates the surface MHC-I, mature MHC-II, CD4, CD28, CCR5 and CXCR4 molecules. Mediates internalization and degradation of host CD4 through the interaction of with the cytoplasmic tail of CD4, the recruitment of AP-2 (clathrin adapter protein complex 2), internalization through clathrin coated pits, and subsequent transport to endosomes and lysosomes for degradation. Diverts host MHC-I molecules to the trans-Golgi network-associated endosomal compartments by an endocytic pathway to finally target them for degradation. MHC-I down-regulation may involve AP-1 (clathrin adapter protein complex 1) or possibly Src family kinase-ZAP70/Syk-PI3K cascade recruited by PACS2. In consequence infected cells are masked for immune recognition by cytotoxic T-lymphocytes. Decreasing the number of immune receptors also prevents reinfection by more HIV particles (superinfection). Down-regulates host SERINC3 and SERINC5 thereby excluding these proteins from the viral particles. Virion infectivity is drastically higher when SERINC3 or SERINC5 are excluded from the viral envelope, because these host antiviral proteins impair the membrane fusion event necessary for subsequent virion penetration. In terms of biological role, bypasses host T-cell signaling by inducing a transcriptional program nearly identical to that of anti-CD3 cell activation. Interaction with TCR-zeta chain up-regulates the Fas ligand (FasL). Increasing surface FasL molecules and decreasing surface MHC-I molecules on infected CD4(+) cells send attacking cytotoxic CD8+ T-lymphocytes into apoptosis. Functionally, plays a role in optimizing the host cell environment for viral replication without causing cell death by apoptosis. Protects the infected cells from apoptosis in order to keep them alive until the next virus generation is ready to strike. Inhibits the Fas and TNFR-mediated death signals by blocking MAP3K5/ASK1. Decreases the half-life of TP53, protecting the infected cell against p53-mediated apoptosis. Inhibits the apoptotic signals regulated by the Bcl-2 family proteins through the formation of a Nef/PI3-kinase/PAK2 complex that leads to activation of PAK2 and induces phosphorylation of host BAD. Extracellular Nef protein targets CD4(+) T-lymphocytes for apoptosis by interacting with CXCR4 surface receptors. This is Protein Nef from Simian immunodeficiency virus (isolate CPZ GAB1) (SIV-cpz).